Here is a 324-residue protein sequence, read N- to C-terminus: Beta-ketoacyl-[acyl-carrier-protein] synthase III (324 aa).

Catalysis depends on residues Cys112 and His249. Residues 250–254 (QANDR) are ACP-binding. Residue Asn279 is part of the active site.

It belongs to the thiolase-like superfamily. FabH family. Homodimer.

It is found in the cytoplasm. The catalysed reaction is malonyl-[ACP] + acetyl-CoA + H(+) = 3-oxobutanoyl-[ACP] + CO2 + CoA. It participates in lipid metabolism; fatty acid biosynthesis. Catalyzes the condensation reaction of fatty acid synthesis by the addition to an acyl acceptor of two carbons from malonyl-ACP. Catalyzes the first condensation reaction which initiates fatty acid synthesis and may therefore play a role in governing the total rate of fatty acid production. Possesses both acetoacetyl-ACP synthase and acetyl transacylase activities. Its substrate specificity determines the biosynthesis of branched-chain and/or straight-chain of fatty acids. This chain is Beta-ketoacyl-[acyl-carrier-protein] synthase III, found in Streptococcus pneumoniae serotype 2 (strain D39 / NCTC 7466).